The following is a 392-amino-acid chain: Formate-dependent phosphoribosylglycinamide formyltransferase (392 aa).

N(1)-(5-phospho-beta-D-ribosyl)glycinamide-binding positions include 22–23 (EL) and Glu-82. Residues Arg-114, Lys-155, 160-165 (SSGKGQ), 195-198 (EGVV), and Glu-203 each bind ATP. An ATP-grasp domain is found at 119–308 (RLAAEELQLP…EFALHVRAFL (190 aa)). Positions 267 and 279 each coordinate Mg(2+). N(1)-(5-phospho-beta-D-ribosyl)glycinamide contacts are provided by residues Asp-286, Lys-355, and 362–363 (RR).

Belongs to the PurK/PurT family. As to quaternary structure, homodimer.

It carries out the reaction N(1)-(5-phospho-beta-D-ribosyl)glycinamide + formate + ATP = N(2)-formyl-N(1)-(5-phospho-beta-D-ribosyl)glycinamide + ADP + phosphate + H(+). Its pathway is purine metabolism; IMP biosynthesis via de novo pathway; N(2)-formyl-N(1)-(5-phospho-D-ribosyl)glycinamide from N(1)-(5-phospho-D-ribosyl)glycinamide (formate route): step 1/1. In terms of biological role, involved in the de novo purine biosynthesis. Catalyzes the transfer of formate to 5-phospho-ribosyl-glycinamide (GAR), producing 5-phospho-ribosyl-N-formylglycinamide (FGAR). Formate is provided by PurU via hydrolysis of 10-formyl-tetrahydrofolate. This Escherichia coli O1:K1 / APEC protein is Formate-dependent phosphoribosylglycinamide formyltransferase.